Consider the following 145-residue polypeptide: 3-hydroxyacyl-[acyl-carrier-protein] dehydratase FabZ (145 aa).

His51 is an active-site residue.

Belongs to the thioester dehydratase family. FabZ subfamily.

It is found in the cytoplasm. The catalysed reaction is a (3R)-hydroxyacyl-[ACP] = a (2E)-enoyl-[ACP] + H2O. In terms of biological role, involved in unsaturated fatty acids biosynthesis. Catalyzes the dehydration of short chain beta-hydroxyacyl-ACPs and long chain saturated and unsaturated beta-hydroxyacyl-ACPs. The sequence is that of 3-hydroxyacyl-[acyl-carrier-protein] dehydratase FabZ from Staphylococcus carnosus (strain TM300).